A 554-amino-acid polypeptide reads, in one-letter code: Phosphomethylpyrimidine synthase (554 aa).

Substrate-binding positions include asparagine 188, methionine 217, tyrosine 246, histidine 282, 302–304 (SRG), 343–346 (DGLR), and glutamate 382. Histidine 386 lines the Zn(2+) pocket. Tyrosine 409 contacts substrate. Histidine 450 contributes to the Zn(2+) binding site. Cysteine 530, cysteine 533, and cysteine 538 together coordinate [4Fe-4S] cluster.

It belongs to the ThiC family. Homodimer. [4Fe-4S] cluster serves as cofactor.

The catalysed reaction is 5-amino-1-(5-phospho-beta-D-ribosyl)imidazole + S-adenosyl-L-methionine = 4-amino-2-methyl-5-(phosphooxymethyl)pyrimidine + CO + 5'-deoxyadenosine + formate + L-methionine + 3 H(+). It participates in cofactor biosynthesis; thiamine diphosphate biosynthesis. Functionally, catalyzes the synthesis of the hydroxymethylpyrimidine phosphate (HMP-P) moiety of thiamine from aminoimidazole ribotide (AIR) in a radical S-adenosyl-L-methionine (SAM)-dependent reaction. The polypeptide is Phosphomethylpyrimidine synthase (Coxiella burnetii (strain RSA 493 / Nine Mile phase I)).